We begin with the raw amino-acid sequence, 84 residues long: MGVKGQLLQDPFLNILRKERIPVSIYLVNGIKLQGQIDSFDQYVVLLKNSVTQMVYKHAISTIVPAKAISIPIPADTQTEQDEP.

One can recognise a Sm domain in the interval 10-69 (DPFLNILRKERIPVSIYLVNGIKLQGQIDSFDQYVVLLKNSVTQMVYKHAISTIVPAKAI).

The protein belongs to the Hfq family. Homohexamer.

RNA chaperone that binds small regulatory RNA (sRNAs) and mRNAs to facilitate mRNA translational regulation in response to envelope stress, environmental stress and changes in metabolite concentrations. Also binds with high specificity to tRNAs. This chain is RNA-binding protein Hfq, found in Nitrosomonas europaea (strain ATCC 19718 / CIP 103999 / KCTC 2705 / NBRC 14298).